The primary structure comprises 558 residues: Factor VII-activating protease (558 aa).

The signal sequence occupies residues 1–23; the sequence is MFARMSDLHVLLLMVLAGKTAFG. N54 carries an N-linked (GlcNAc...) asparagine glycan. 3 consecutive EGF-like domains span residues 71 to 107, 109 to 146, and 148 to 186; these read EDDPCLSNPCTHGGDCLVSGATFTCRCPDPFSGNRCQ, VQNKCKNNPCGRGDCLITQSPPYHRCACKHPYRGSDCS, and VVPVCRPNPCQNGGTCSRQRRRSKFTCACPDQFKGKLCE. 18 disulfide bridges follow: C75/C86, C80/C95, C97/C106, C113/C123, C118/C134, C136/C145, C152/C163, C157/C174, C176/C185, C192/C274, C213/C255, C244/C269, C299/C433, C345/C361, C353/C422, C445/C513, C475/C491, and C503/C531. Positions 191 to 274 constitute a Kringle domain; the sequence is DCYVDDGYSY…KWEYCDVPAC (84 aa). A Peptidase S1 domain is found at 312–553; the sequence is IFGGFKSTAG…FLTWIKATME (242 aa). Residues H360 and D409 each act as charge relay system in the active site. The active-site Charge relay system is S507.

It belongs to the peptidase S1 family. Heterodimer; disulfide-linked. Heterodimer of a 50 kDa heavy and a 27 kDa light chain linked by a disulfide bond. Proteolytic cleavage at Gly-23 or Leu-27 can give rise to the 50 kDa heavy chain (HC) and cleavage at Arg-311 or Lys-317 can give rise to the 27 kDa light chain (LC). The HC can undergo further proteolytic cleavage giving rise to a 26 kDa fragment. The LC can undergo further proteolytic cleavage at Arg-311 leading to a 17-kDa fragment and at Arg-478 leading to a 8-kDa fragment.

The protein resides in the secreted. Cleaves the alpha-chain at multiple sites and the beta-chain between 'Lys-53' and 'Lys-54' but not the gamma-chain of fibrinogen and therefore does not initiate the formation of the fibrin clot and does not cause the fibrinolysis directly. It does not cleave (activate) prothrombin and plasminogen but converts the inactive single chain urinary plasminogen activator (pro-urokinase) to the active two chain form. Activates coagulation factor VII. May function as a tumor suppressor negatively regulating cell proliferation and cell migration. This Bos taurus (Bovine) protein is Factor VII-activating protease (HABP2).